The chain runs to 687 residues: Phage-like element PBSX protein XkdV (687 aa).

This sequence to B.subtilis YqcC.

This chain is Phage-like element PBSX protein XkdV (xkdV), found in Bacillus subtilis (strain 168).